We begin with the raw amino-acid sequence, 493 residues long: Probable vesicular acetylcholine transporter-B (493 aa).

Residues 1 to 39 are Cytoplasmic-facing; the sequence is MQSTGAPGLAQSAVLQLSAMGERSRELGGALREPERKRR. The chain crosses the membrane as a helical span at residues 40–60; the sequence is LLLVVVCVALLLDNMLYMVIV. Over 61–86 the chain is Lumenal, vesicle; that stretch reads PIIPDYLADLRGERGNSSADLDIQIG. The N-linked (GlcNAc...) asparagine glycan is linked to Asn-76. Residues 87–107 form a helical membrane-spanning segment; that stretch reads VLFASKALLQLLVNPLSGTFI. Residues 108–113 lie on the Cytoplasmic side of the membrane; the sequence is DRVGYD. Residues 114 to 134 form a helical membrane-spanning segment; that stretch reads LPLLIGLLVMFLSTCIFAFAE. The Lumenal, vesicle segment spans residues 135–143; that stretch reads NYGTLFAAR. The helical transmembrane segment at 144-164 threads the bilayer; that stretch reads SLQGLGSAFADTSGIAMIADK. Over 165–174 the chain is Cytoplasmic; that stretch reads FTEEAERSRA. A helical membrane pass occupies residues 175 to 195; the sequence is LGIALAFISFGSLVAPPFGGI. At 196–203 the chain is on the lumenal, vesicle side; that stretch reads LYEFAGKR. Residues 204 to 224 traverse the membrane as a helical segment; it reads VPFIVLACVCLADGVLLLTVV. The Cytoplasmic portion of the chain corresponds to 225-247; it reads KPFSDRTRENMPVGTPIHRLMVD. The helical transmembrane segment at 248–268 threads the bilayer; the sequence is PYIAVVAGALTVCNIPLAFLE. Over 269 to 284 the chain is Lumenal, vesicle; the sequence is PTIANWMESTMDASKW. Residues 285-305 traverse the membrane as a helical segment; sequence QMGLVWLPAFLPHVLGVYITV. Residues 306 to 315 lie on the Cytoplasmic side of the membrane; sequence RLAARYPERQ. The helical transmembrane segment at 316–336 threads the bilayer; the sequence is WFYGALGMVIIGASSCTVPAC. Residues 337 to 347 are Lumenal, vesicle-facing; it reads KTFGELVFPLC. Residues 348–368 form a helical membrane-spanning segment; sequence GICFGIALVDTALLPTLAFLV. The Cytoplasmic segment spans residues 369–378; it reads DVRHVSVYGS. Residues 379–399 traverse the membrane as a helical segment; that stretch reads VYAIADISYSVAYAMGPVVAG. Residues 400-406 are Lumenal, vesicle-facing; that stretch reads QIVHNLG. Residues 407–427 form a helical membrane-spanning segment; it reads FVQLNLGMGLVNVLYAPALLL. Residues 428–493 lie on the Cytoplasmic side of the membrane; the sequence is LRPVCQIKPS…EEEESGPESA (66 aa). The segment at 467–493 is disordered; it reads GLSAGAGTEHGLRGRSEEEEESGPESA. The segment covering 483–493 has biased composition (acidic residues); that stretch reads EEEEESGPESA.

This sequence belongs to the major facilitator superfamily. Vesicular transporter family.

Its subcellular location is the membrane. In terms of biological role, involved in acetylcholine transport into synaptic vesicles. This chain is Probable vesicular acetylcholine transporter-B (slc18a3b), found in Danio rerio (Zebrafish).